The sequence spans 59 residues: Small ribosomal subunit protein bS21 (59 aa).

The protein belongs to the bacterial ribosomal protein bS21 family.

This is Small ribosomal subunit protein bS21 from Acholeplasma laidlawii (strain PG-8A).